The sequence spans 324 residues: Putative transcription factor sel-7 (324 aa).

The span at 67-85 shows a compositional bias: polar residues; the sequence is SPPQTVISEAPPQSFTPSA. Residues 67 to 151 form a disordered region; sequence SPPQTVISEA…DEKVLADGPF (85 aa). A compositionally biased stretch (low complexity) spans 86–98; that stretch reads TNSTSDKTSSSLK. The segment covering 106–123 has biased composition (acidic residues); it reads SDGDLDMEGEEDTEELFD. Residues 124-133 are compositionally biased toward polar residues; it reads NESQPSQRNQ. The span at 134 to 146 shows a compositional bias: basic and acidic residues; the sequence is SPKETEVEDEKVL.

Multimer. May interact with mediator complex subunit mdt-29. Widely expressed, including in pharyngeal muscle cells and body wall muscle cells.

The protein localises to the nucleus. Putative transcription factor. Positive regulator of the lin-12/Notch signaling pathway. Binds to specific DNA sequences in regulatory elements. Involved in cell fate decisions that require cell-cell interactions, such as the anchor cell (AC) / ventral uterine (VU) precursor cell fate decision. Heterochronic protein which controls the choice of stage specific cell fates, including the larval L3 stage-specific fate of seam cells. Involved in regulating the temporal expression pattern of hunchback-like protein hbl-1, thereby playing a role in the progression between larval stages L2 and L3. The sequence is that of Putative transcription factor sel-7 from Caenorhabditis elegans.